A 135-amino-acid polypeptide reads, in one-letter code: ATP synthase epsilon chain (135 aa).

Belongs to the ATPase epsilon chain family. As to quaternary structure, F-type ATPases have 2 components, CF(1) - the catalytic core - and CF(0) - the membrane proton channel. CF(1) has five subunits: alpha(3), beta(3), gamma(1), delta(1), epsilon(1). CF(0) has three main subunits: a, b and c.

It localises to the cell inner membrane. Functionally, produces ATP from ADP in the presence of a proton gradient across the membrane. The sequence is that of ATP synthase epsilon chain from Rhizobium etli (strain ATCC 51251 / DSM 11541 / JCM 21823 / NBRC 15573 / CFN 42).